The following is a 338-amino-acid chain: Solute carrier family 35 member G6 (338 aa).

Positions 1–25 are disordered; the sequence is MAGSHPYLNPPDSTHPSPPSAPPSL. 9 helical membrane passes run 40-60, 67-87, 105-125, 160-180, 190-210, 221-241, 255-275, 281-301, and 310-330; these read LLVALLGGGLPAGFVGPLSHM, LPSLELLICRCLFHLPIALLL, YFYALLNVLSIGCAYSAVQVV, CGLLGSILGLIIIVGPGLWTL, ALGYGQAFVGGLALSLGLLVY, TVAFLSGLVGLLGSVPGLFVL, CVGAVGILALVSFTCVSYAVT, LVCAVLHSEVVVALILQYYML, and IVGAGVVLGSIAIITAWNLSC. In terms of domain architecture, EamA 1 spans 49-174; sequence LPAGFVGPLS…SILGLIIIVG (126 aa). An EamA 2 domain is found at 272-325; that stretch reads YAVTKAHPALVCAVLHSEVVVALILQYYMLHETVAPSDIVGAGVVLGSIAIITA.

It belongs to the SLC35G solute transporter family. As to expression, expressed in placenta and testis.

It localises to the membrane. The sequence is that of Solute carrier family 35 member G6 (SLC35G6) from Homo sapiens (Human).